Reading from the N-terminus, the 237-residue chain is uncharacterized protein (237 aa).

The protein belongs to the bactofilin family.

This is an uncharacterized protein from Bacillus subtilis (strain 168).